The chain runs to 352 residues: Molybdenum import ATP-binding protein ModC (352 aa).

Residues Met-2–Gly-230 form the ABC transporter domain. Residue Gly-32 to Ser-39 coordinates ATP. One can recognise a Mop domain in the interval Lys-290–Met-352.

It belongs to the ABC transporter superfamily. Molybdate importer (TC 3.A.1.8) family. The complex is composed of two ATP-binding proteins (ModC), two transmembrane proteins (ModB) and a solute-binding protein (ModA).

It is found in the cell inner membrane. It catalyses the reaction molybdate(out) + ATP + H2O = molybdate(in) + ADP + phosphate + H(+). Part of the ABC transporter complex ModABC involved in molybdenum import. Responsible for energy coupling to the transport system. This chain is Molybdenum import ATP-binding protein ModC, found in Mannheimia succiniciproducens (strain KCTC 0769BP / MBEL55E).